Reading from the N-terminus, the 214-residue chain is 7-cyano-7-deazaguanine synthase (214 aa).

10 to 20 (FSGGQDSTTCL) is a binding site for ATP. Cys184, Cys193, Cys196, and Cys199 together coordinate Zn(2+).

The protein belongs to the QueC family. As to quaternary structure, homodimer. Requires Zn(2+) as cofactor.

It catalyses the reaction 7-carboxy-7-deazaguanine + NH4(+) + ATP = 7-cyano-7-deazaguanine + ADP + phosphate + H2O + H(+). Its pathway is purine metabolism; 7-cyano-7-deazaguanine biosynthesis. Functionally, catalyzes the ATP-dependent conversion of 7-carboxy-7-deazaguanine (CDG) to 7-cyano-7-deazaguanine (preQ(0)). This Exiguobacterium sp. (strain ATCC BAA-1283 / AT1b) protein is 7-cyano-7-deazaguanine synthase.